A 314-amino-acid chain; its full sequence is Olfactory receptor 5G3 (314 aa).

Over 1-24 (MEDKNQTVVTEFLLLGLTDHPYQK) the chain is Extracellular. An N-linked (GlcNAc...) asparagine glycan is attached at Asn5. Residues 25-45 (IVLFFMFLFVYLITLGGNLGM) traverse the membrane as a helical segment. Over 46–97 (ITLIWIDPRLHTPMYFFLRHLSFVDICSSSSVVPKMLCNIFAEKKDITFLGC) the chain is Cytoplasmic. The cysteines at positions 97 and 179 are disulfide-linked. A helical transmembrane segment spans residues 98 to 118 (AAQMWFFGLFEAAECFLLAAM). The Extracellular portion of the chain corresponds to 119–143 (AYDRYVAICKPLLYTLIMSQQVCMQ). A helical transmembrane segment spans residues 144 to 164 (LVVGPYAMALISTMTHTIFTF). Over 165-167 (CLP) the chain is Cytoplasmic. The chain crosses the membrane as a helical span at residues 168 to 188 (FCGSNIINHFFCDIFPLLSLA). The Extracellular segment spans residues 189 to 196 (CADTWVNK). The helical transmembrane segment at 197–217 (FVLFVLAGAIGVLSGLIIMVS) threads the bilayer. Residues 218–237 (YICILMTILKIQTADGKQKA) lie on the Cytoplasmic side of the membrane. The helical transmembrane segment at 238 to 258 (FFTCFSHLAAVSILYGTLFLI) threads the bilayer. At 259 to 268 (YVRPSSSSSL) the chain is on the extracellular side. The helical transmembrane segment at 269–289 (GIYKVISLFYTVVIPMVNPLI) threads the bilayer. The Cytoplasmic portion of the chain corresponds to 290 to 314 (YSLRNKEVKDAFRRKIERKKFIIGR).

The protein belongs to the G-protein coupled receptor 1 family.

It is found in the cell membrane. Its function is as follows. Odorant receptor. This Homo sapiens (Human) protein is Olfactory receptor 5G3 (OR5G3).